A 341-amino-acid chain; its full sequence is tRNA N6-adenosine threonylcarbamoyltransferase (341 aa).

Fe cation is bound by residues His111 and His115. Residues 134–138, Asp167, Gly180, and Asn276 each bind substrate; that span reads LVSGG. Asp304 contacts Fe cation.

The protein belongs to the KAE1 / TsaD family. Requires Fe(2+) as cofactor.

It localises to the cytoplasm. The catalysed reaction is L-threonylcarbamoyladenylate + adenosine(37) in tRNA = N(6)-L-threonylcarbamoyladenosine(37) in tRNA + AMP + H(+). In terms of biological role, required for the formation of a threonylcarbamoyl group on adenosine at position 37 (t(6)A37) in tRNAs that read codons beginning with adenine. Is involved in the transfer of the threonylcarbamoyl moiety of threonylcarbamoyl-AMP (TC-AMP) to the N6 group of A37, together with TsaE and TsaB. TsaD likely plays a direct catalytic role in this reaction. This is tRNA N6-adenosine threonylcarbamoyltransferase from Pseudomonas paraeruginosa (strain DSM 24068 / PA7) (Pseudomonas aeruginosa (strain PA7)).